Consider the following 66-residue polypeptide: Large ribosomal subunit protein eL24 (66 aa).

Zn(2+)-binding residues include Cys6, Cys9, Cys32, and Cys36. The C4-type zinc-finger motif lies at 6-36 (CSFCGKTIEPGTGIMYVRKDGAILYFCSNKC).

It belongs to the eukaryotic ribosomal protein eL24 family. As to quaternary structure, part of the 50S ribosomal subunit. Forms a cluster with proteins L3 and L14. It depends on Zn(2+) as a cofactor.

Binds to the 23S rRNA. The polypeptide is Large ribosomal subunit protein eL24 (Thermoplasma volcanium (strain ATCC 51530 / DSM 4299 / JCM 9571 / NBRC 15438 / GSS1)).